We begin with the raw amino-acid sequence, 389 residues long: Ethanolamine-phosphate cytidylyltransferase (389 aa).

CTP contacts are provided by residues 221–222 (AF), 229–232 (HVDF), Lys-259, 307–310 (HGKT), and 336–340 (SGNDL). Residues Thr-341 and Thr-342 each carry the phosphothreonine modification.

This sequence belongs to the cytidylyltransferase family.

It catalyses the reaction phosphoethanolamine + CTP + H(+) = CDP-ethanolamine + diphosphate. Its pathway is phospholipid metabolism; phosphatidylethanolamine biosynthesis; phosphatidylethanolamine from ethanolamine: step 2/3. Functionally, ethanolamine-phosphate cytidylyltransferase that catalyzes the second step in the synthesis of phosphatidylethanolamine (PE) from ethanolamine via the CDP-ethanolamine pathway. Phosphatidylethanolamine is a dominant inner-leaflet phospholipid in cell membranes, where it plays a role in membrane function by structurally stabilizing membrane-anchored proteins, and participates in important cellular processes such as cell division, cell fusion, blood coagulation, and apoptosis. This Bos taurus (Bovine) protein is Ethanolamine-phosphate cytidylyltransferase (PCYT2).